A 1268-amino-acid polypeptide reads, in one-letter code: Neurocan core protein (1268 aa).

The first 22 residues, 1-22 (MGAGSVWASGLLLLWLLLLVAG), serve as a signal peptide directing secretion. One can recognise an Ig-like V-type domain in the interval 37-157 (RMLKSGSGPV…EQDLVTLEVT (121 aa)). Cystine bridges form between C58–C139, C181–C252, C205–C226, C279–C354, and C303–C324. N121 is a glycosylation site (N-linked (GlcNAc...) asparagine). Link domains follow at residues 159 to 254 (VVFH…YCFA) and 258 to 356 (GGEV…YCFR). The N-linked (GlcNAc...) asparagine glycan is linked to N339. 4 disordered regions span residues 363-391 (QHGD…ELKP), 406-442 (PLMS…SWPS), 472-540 (PLGT…DQSH), and 574-630 (ISPS…LQAS). O-linked (Xyl...) (chondroitin sulfate) serine glycosylation is found at S380 and S410. Polar residues predominate over residues 419–430 (TWTQAPEETLGS). Over residues 575 to 585 (SPSVPSTESTP) the composition is skewed to low complexity. A compositionally biased stretch (pro residues) spans 608–617 (PSEPPAPSPG). Low complexity predominate over residues 618–630 (PSEALSAVSLQAS). N742 is a glycosylation site (N-linked (GlcNAc...) asparagine). Residues 960-996 (PTDPCENNPCLHGGTCHTNGTVYGCSCDQGYAGENCE) form the EGF-like 1 domain. 11 disulfides stabilise this stretch: C964–C975, C969–C984, C986–C995, C1002–C1013, C1007–C1022, C1024–C1033, C1040–C1051, C1068–C1160, C1136–C1152, C1167–C1210, and C1196–C1223. A glycan (N-linked (GlcNAc...) asparagine) is linked at N978. The EGF-like 2; calcium-binding domain maps to 998-1034 (DIDDCLCSPCENGGTCIDEVNGFICLCLPSYGGSLCE). The 130-residue stretch at 1036–1165 (DTEGCDRGWH…LPYVCKKGTV (130 aa)) folds into the C-type lectin domain. The Sushi domain maps to 1165 to 1225 (VLCGPPPAVE…WDRPQIMCIK (61 aa)). N-linked (GlcNAc...) asparagine glycosylation is present at N1175. Over residues 1228 to 1255 (RSHRMRRHHHHPHRHHKPRKEHRKHKRH) the composition is skewed to basic residues. A disordered region spans residues 1228–1268 (RSHRMRRHHHHPHRHHKPRKEHRKHKRHPAEDWEKDEGDFC).

This sequence belongs to the aggrecan/versican proteoglycan family. Post-translationally, O-glycosylated; contains chondroitin sulfate. In terms of tissue distribution, brain.

It localises to the secreted. May modulate neuronal adhesion and neurite growth during development by binding to neural cell adhesion molecules (NG-CAM and N-CAM). Chondroitin sulfate proteoglycan; binds to hyaluronic acid. This Mus musculus (Mouse) protein is Neurocan core protein (Ncan).